Reading from the N-terminus, the 575-residue chain is Dihydroxy-acid dehydratase (575 aa).

The segment at 1-27 (MSNQERQERPEKDPDLRSTEVTEGYEK) is disordered. Residue Cys61 coordinates [2Fe-2S] cluster. Asp93 is a Mg(2+) binding site. Residue Cys134 participates in [2Fe-2S] cluster binding. Mg(2+)-binding residues include Asp135 and Lys136. N6-carboxylysine is present on Lys136. A [2Fe-2S] cluster-binding site is contributed by Cys206. Glu460 provides a ligand contact to Mg(2+). Ser486 serves as the catalytic Proton acceptor.

The protein belongs to the IlvD/Edd family. Homodimer. It depends on [2Fe-2S] cluster as a cofactor. Requires Mg(2+) as cofactor.

The enzyme catalyses (2R)-2,3-dihydroxy-3-methylbutanoate = 3-methyl-2-oxobutanoate + H2O. The catalysed reaction is (2R,3R)-2,3-dihydroxy-3-methylpentanoate = (S)-3-methyl-2-oxopentanoate + H2O. It functions in the pathway amino-acid biosynthesis; L-isoleucine biosynthesis; L-isoleucine from 2-oxobutanoate: step 3/4. The protein operates within amino-acid biosynthesis; L-valine biosynthesis; L-valine from pyruvate: step 3/4. In terms of biological role, functions in the biosynthesis of branched-chain amino acids. Catalyzes the dehydration of (2R,3R)-2,3-dihydroxy-3-methylpentanoate (2,3-dihydroxy-3-methylvalerate) into 2-oxo-3-methylpentanoate (2-oxo-3-methylvalerate) and of (2R)-2,3-dihydroxy-3-methylbutanoate (2,3-dihydroxyisovalerate) into 2-oxo-3-methylbutanoate (2-oxoisovalerate), the penultimate precursor to L-isoleucine and L-valine, respectively. In Haloarcula marismortui (strain ATCC 43049 / DSM 3752 / JCM 8966 / VKM B-1809) (Halobacterium marismortui), this protein is Dihydroxy-acid dehydratase.